We begin with the raw amino-acid sequence, 324 residues long: Beta-ketoacyl-[acyl-carrier-protein] synthase III (324 aa).

Residues cysteine 111 and histidine 251 contribute to the active site. The segment at 252–256 (QANTR) is ACP-binding. Residue asparagine 281 is part of the active site.

Belongs to the thiolase-like superfamily. FabH family. As to quaternary structure, homodimer.

It localises to the plastid. The protein resides in the chloroplast. The catalysed reaction is malonyl-[ACP] + acetyl-CoA + H(+) = 3-oxobutanoyl-[ACP] + CO2 + CoA. The protein operates within lipid metabolism; fatty acid biosynthesis. In terms of biological role, catalyzes the condensation reaction of fatty acid synthesis by the addition to an acyl acceptor of two carbons from malonyl-ACP. Catalyzes the first condensation reaction which initiates fatty acid synthesis and may therefore play a role in governing the total rate of fatty acid production. Possesses both acetoacetyl-ACP synthase and acetyl transacylase activities. Its substrate specificity determines the biosynthesis of branched-chain and/or straight-chain of fatty acids. This is Beta-ketoacyl-[acyl-carrier-protein] synthase III from Pyropia yezoensis (Susabi-nori).